Consider the following 180-residue polypeptide: Ribosome rescue factor SmrB (180 aa).

Residues 98–173 (LDLHGLTQLI…GDAALLLLVE (76 aa)) form the Smr domain.

This sequence belongs to the SmrB family. Associates with collided ribosomes, but not with correctly translating polysomes.

Acts as a ribosome collision sensor. Detects stalled/collided disomes (pairs of ribosomes where the leading ribosome is stalled and a second ribosome has collided with it) and endonucleolytically cleaves mRNA at the 5' boundary of the stalled ribosome. Stalled/collided disomes form a new interface (primarily via the 30S subunits) that binds SmrB. Cleaved mRNA becomes available for tmRNA ligation, leading to ribosomal subunit dissociation and rescue of stalled ribosomes. In Proteus mirabilis (strain HI4320), this protein is Ribosome rescue factor SmrB.